Consider the following 345-residue polypeptide: Heat-inducible transcription repressor HrcA (345 aa).

Belongs to the HrcA family.

In terms of biological role, negative regulator of class I heat shock genes (grpE-dnaK-dnaJ and groELS operons). Prevents heat-shock induction of these operons. This chain is Heat-inducible transcription repressor HrcA, found in Dehalococcoides mccartyi (strain ATCC BAA-2266 / KCTC 15142 / 195) (Dehalococcoides ethenogenes (strain 195)).